Reading from the N-terminus, the 629-residue chain is tRNA uridine 5-carboxymethylaminomethyl modification enzyme MnmG (629 aa).

G13–G18 contributes to the FAD binding site. G273–F287 contacts NAD(+).

Belongs to the MnmG family. Homodimer. Heterotetramer of two MnmE and two MnmG subunits. The cofactor is FAD.

It localises to the cytoplasm. Its function is as follows. NAD-binding protein involved in the addition of a carboxymethylaminomethyl (cmnm) group at the wobble position (U34) of certain tRNAs, forming tRNA-cmnm(5)s(2)U34. The chain is tRNA uridine 5-carboxymethylaminomethyl modification enzyme MnmG from Tolumonas auensis (strain DSM 9187 / NBRC 110442 / TA 4).